Here is a 161-residue protein sequence, read N- to C-terminus: Transcription elongation factor GreA (161 aa).

Residues 8–28 (LTQEGFKQLEKELENLIQVKR) are a coiled coil.

This sequence belongs to the GreA/GreB family.

In terms of biological role, necessary for efficient RNA polymerase transcription elongation past template-encoded arresting sites. The arresting sites in DNA have the property of trapping a certain fraction of elongating RNA polymerases that pass through, resulting in locked ternary complexes. Cleavage of the nascent transcript by cleavage factors such as GreA or GreB allows the resumption of elongation from the new 3'terminus. GreA releases sequences of 2 to 3 nucleotides. The chain is Transcription elongation factor GreA from Mycoplasma genitalium (strain ATCC 33530 / DSM 19775 / NCTC 10195 / G37) (Mycoplasmoides genitalium).